The chain runs to 297 residues: tRNA dimethylallyltransferase (297 aa).

ATP is bound at residue 10 to 17; sequence GITASGKS. 12 to 17 lines the substrate pocket; it reads TASGKS. Residues 36–39 form an interaction with substrate tRNA region; it reads DSKQ.

Belongs to the IPP transferase family. In terms of assembly, monomer. Requires Mg(2+) as cofactor.

It carries out the reaction adenosine(37) in tRNA + dimethylallyl diphosphate = N(6)-dimethylallyladenosine(37) in tRNA + diphosphate. Catalyzes the transfer of a dimethylallyl group onto the adenine at position 37 in tRNAs that read codons beginning with uridine, leading to the formation of N6-(dimethylallyl)adenosine (i(6)A). The chain is tRNA dimethylallyltransferase from Wolbachia pipientis subsp. Culex pipiens (strain wPip).